Here is a 100-residue protein sequence, read N- to C-terminus: Large ribosomal subunit protein uL23 (100 aa).

Belongs to the universal ribosomal protein uL23 family. Part of the 50S ribosomal subunit. Contacts protein L29, and trigger factor when it is bound to the ribosome.

In terms of biological role, one of the early assembly proteins it binds 23S rRNA. One of the proteins that surrounds the polypeptide exit tunnel on the outside of the ribosome. Forms the main docking site for trigger factor binding to the ribosome. The chain is Large ribosomal subunit protein uL23 from Parasynechococcus marenigrum (strain WH8102).